We begin with the raw amino-acid sequence, 1171 residues long: DExH-box ATP-dependent RNA helicase DExH15 chloroplastic (1171 aa).

The N-terminal 58 residues, 1 to 58 (MNTLPVVSLTASSSFKFFHFPSLHRSLSHSPNFSFTKSLILNPNHLSFKSTLNSLSPS), are a transit peptide targeting the chloroplast. Residues 53 to 62 (NSLSPSQSQL) are compositionally biased toward polar residues. The segment at 53 to 111 (NSLSPSQSQLYEEEDDEEEEEEDEDDDDEAADEYDNISDEIRNSDDDDDDEETEFSVDL) is disordered. Acidic residues-rich tracts occupy residues 63–90 (YEEEDDEEEEEEDEDDDDEAADEYDNIS) and 97–107 (DDDDDDEETEF). Residues 163–327 (IEAFLRGSSV…WIGEIHGKTE (165 aa)) enclose the Helicase ATP-binding domain. 176 to 183 (APTSSGKT) provides a ligand contact to ATP. The DEVH box signature appears at 275–278 (DEVH). Positions 424–620 (QISDTLWHLQ…ASYGMVLNLV (197 aa)) constitute a Helicase C-terminal domain.

The protein belongs to the DExH box helicase family.

The protein localises to the plastid. It localises to the chloroplast. It is found in the cytoplasmic granule. It carries out the reaction ATP + H2O = ADP + phosphate + H(+). Its function is as follows. RNA helicase involved in group II intron splicing. Essential protein required during embryogenesis. Involved in post-transcriptional gene silencing. Modulates the determination of cell fate. Necessary for normal plasmodesmata (PD) development and aperture regulation. The sequence is that of DExH-box ATP-dependent RNA helicase DExH15 chloroplastic (ISE2) from Arabidopsis thaliana (Mouse-ear cress).